We begin with the raw amino-acid sequence, 503 residues long: ATP synthase subunit alpha (503 aa).

169–176 (GDRQTGKT) contributes to the ATP binding site.

The protein belongs to the ATPase alpha/beta chains family. In terms of assembly, F-type ATPases have 2 components, CF(1) - the catalytic core - and CF(0) - the membrane proton channel. CF(1) has five subunits: alpha(3), beta(3), gamma(1), delta(1), epsilon(1). CF(0) has three main subunits: a(1), b(2) and c(9-12). The alpha and beta chains form an alternating ring which encloses part of the gamma chain. CF(1) is attached to CF(0) by a central stalk formed by the gamma and epsilon chains, while a peripheral stalk is formed by the delta and b chains.

The protein resides in the cell membrane. It catalyses the reaction ATP + H2O + 4 H(+)(in) = ADP + phosphate + 5 H(+)(out). Functionally, produces ATP from ADP in the presence of a proton gradient across the membrane. The alpha chain is a regulatory subunit. This chain is ATP synthase subunit alpha, found in Staphylococcus epidermidis (strain ATCC 35984 / DSM 28319 / BCRC 17069 / CCUG 31568 / BM 3577 / RP62A).